We begin with the raw amino-acid sequence, 37 residues long: Cytochrome b6-f complex subunit 5 (37 aa).

Residues 5–25 form a helical membrane-spanning segment; it reads LLSGIVLGLVPITITGLLVTA.

This sequence belongs to the PetG family. In terms of assembly, the 4 large subunits of the cytochrome b6-f complex are cytochrome b6, subunit IV (17 kDa polypeptide, PetD), cytochrome f and the Rieske protein, while the 4 small subunits are PetG, PetL, PetM and PetN. The complex functions as a dimer.

It localises to the plastid. The protein localises to the chloroplast thylakoid membrane. Component of the cytochrome b6-f complex, which mediates electron transfer between photosystem II (PSII) and photosystem I (PSI), cyclic electron flow around PSI, and state transitions. PetG is required for either the stability or assembly of the cytochrome b6-f complex. This chain is Cytochrome b6-f complex subunit 5, found in Tupiella akineta (Green alga).